The primary structure comprises 271 residues: Thiosulfate sulfurtransferase (271 aa).

Rhodanese domains lie at 21 to 129 (GAPE…ALDR) and 159 to 270 (GAAD…TPVE). Catalysis depends on Cys230, which acts as the Cysteine persulfide intermediate.

Its subcellular location is the cytoplasm. The enzyme catalyses thiosulfate + hydrogen cyanide = thiocyanate + sulfite + 2 H(+). Catalyzes the sulfur transfer reaction from thiosulfate to cyanide, thus converting cyanide to the less toxic thiocyanate. Contributes to P.aeruginosa survival under cyanogenic conditions, and thus provides the bacterium with a defense mechanism against endogenous cyanide toxicity. Is the main cytoplasmic rhodanese in P.aeruginosa, accounting for 90% of total rhodanese activity. The chain is Thiosulfate sulfurtransferase from Pseudomonas aeruginosa (strain ATCC 15692 / DSM 22644 / CIP 104116 / JCM 14847 / LMG 12228 / 1C / PRS 101 / PAO1).